The primary structure comprises 604 residues: Aspartate--tRNA(Asp/Asn) ligase (604 aa).

Glu177 serves as a coordination point for L-aspartate. An aspartate region spans residues 201 to 204 (QLFK). Residue Arg223 coordinates L-aspartate. Residues 223–225 (RDE) and Gln232 each bind ATP. Residue His457 coordinates L-aspartate. Residue Glu495 coordinates ATP. Arg502 serves as a coordination point for L-aspartate. Residue 547–550 (GLDR) participates in ATP binding.

This sequence belongs to the class-II aminoacyl-tRNA synthetase family. Type 1 subfamily. As to quaternary structure, homodimer.

The protein localises to the cytoplasm. The enzyme catalyses tRNA(Asx) + L-aspartate + ATP = L-aspartyl-tRNA(Asx) + AMP + diphosphate. In terms of biological role, aspartyl-tRNA synthetase with relaxed tRNA specificity since it is able to aspartylate not only its cognate tRNA(Asp) but also tRNA(Asn). Reaction proceeds in two steps: L-aspartate is first activated by ATP to form Asp-AMP and then transferred to the acceptor end of tRNA(Asp/Asn). This chain is Aspartate--tRNA(Asp/Asn) ligase, found in Synechococcus sp. (strain RCC307).